A 770-amino-acid chain; its full sequence is Amyloid-beta precursor protein (770 aa).

The first 17 residues, 1-17, serve as a signal peptide directing secretion; that stretch reads MLPGLALVLLAAWTARA. Topologically, residues 18-701 are extracellular; the sequence is LEVPTDGNAG…AEDVGSNKGA (684 aa). Residues 28 to 123 form a GFLD subdomain region; it reads LLAEPQVAMF…PYRCLVGEFV (96 aa). Residues 28–189 form the E1 domain; sequence LLAEPQVAMF…RGVEFVCCPL (162 aa). Intrachain disulfides connect C38–C62, C73–C117, C98–C105, C133–C187, C144–C174, and C158–C186. Residue 96 to 110 coordinates heparin; that stretch reads NWCKRSRKQCKTHTH. Residues 131–189 form a cuBD subdomain region; that stretch reads DKCKFLHQERMDVCETHLHWHTVAKETCSEKSTNLHDYGMLLPCGIDKFRGVEFVCCPL. The copper-binding stretch occupies residues 135 to 155; it reads FLHQERMDVCETHLHWHTVAK. Positions 147, 151, and 168 each coordinate Cu(2+). Residues 181–188 form a zinc-binding region; that stretch reads GVEFVCCP. The Zn(2+) site is built by E183, C186, and C187. Positions 196 to 207 are enriched in acidic residues; that stretch reads IDSADAEEDDSD. The segment at 196-284 is disordered; the sequence is IDSADAEEDD…TTTTTTESVE (89 aa). S198 bears the Phosphoserine; by CK2 mark. S206 is subject to Phosphoserine; by CK1. Residues Y217 and Y262 each carry the sulfotyrosine modification. Over residues 228–264 the composition is skewed to acidic residues; it reads VAEEEEVADVEEEEAEDDEDDEDGDEVEEEAEEPYEE. Positions 268–281 are enriched in low complexity; the sequence is RTTSIATTTTTTTE. Intrachain disulfides connect C291–C341, C300–C324, and C316–C337. Residues 291 to 341 form the BPTI/Kunitz inhibitor domain; sequence CSEQAETGPCRAMISRWYFDVTEGKCAPFFYGGCGGNRNNFDTEEYCMAVC. Sulfotyrosine is present on Y336. The OX-2 motif lies at 344–365; it reads VMSQSLLKTTQEHLPQDPVKLP. The E2 domain occupies 374-565; it reads AVDKYLETPG…EEIQDEVDEL (192 aa). The heparin-binding stretch occupies residues 391–423; it reads FQKAKERLEAKHRERMSQVMREWEEAERQAKNL. Phosphoserine is present on S441. The heparin-binding stretch occupies residues 491 to 522; the sequence is FNMLKKYVRAEQKDRQHTLKHFEHVRMVDPKK. Y497 carries the phosphotyrosine modification. The tract at residues 523–540 is collagen-binding; it reads AAQIRSQVMTHLRVIYER. N542 and N571 each carry an N-linked (GlcNAc...) asparagine glycan. 4 residues coordinate Cu(2+): H677, Y681, H684, and H685. Residues H677, Y681, H684, and H685 each coordinate Zn(2+). The interval 695–722 is interaction with PSEN1; that stretch reads VGSNKGAIIGLMVGGVVIATVIVITLVM. A helical transmembrane segment spans residues 702–722; it reads IIGLMVGGVVIATVIVITLVM. The Cytoplasmic segment spans residues 723-770; that stretch reads LKKKQYTSIHHGVVEVDAAVTPEERHLSKMQQNGYENPTYKFFEQMQN. Positions 724 to 734 match the Basolateral sorting signal motif; that stretch reads KKKQYTSIHHG. At T729 the chain carries Phosphothreonine. The residue at position 730 (S730) is a Phosphoserine; by APP-kinase I. Residues 732 to 751 are interaction with G(o)-alpha; that stretch reads HHGVVEVDAAVTPEERHLSK. T743 is subject to Phosphothreonine; by CDK5 and MAPK10. A required for the interaction with KIF5B and for anterograde transport in axons region spans residues 756 to 770; it reads GYENPTYKFFEQMQN. The residue at position 757 (Y757) is a Phosphotyrosine; by ABL1. Residues 757–762 carry the YENPXY motif; contains endocytosis signal motif; the sequence is YENPTY. A Glycyl lysine isopeptide (Lys-Gly) (interchain with G-Cter in ubiquitin) cross-link involves residue K763.

Belongs to the APP family. As to quaternary structure, binds, via its C-terminus, to the PID domain of several cytoplasmic proteins, including APBB family members, the APBA family, MAPK8IP1, SHC1 and NUMB and DAB1. Binding to DAB1 inhibits its serine phosphorylation. Interacts (via NPXY motif) with DAB2 (via PID domain); the interaction is impaired by tyrosine phosphorylation of the NPXY motif. Also interacts with GPCR-like protein BPP, APPBP1, IB1, KNS2 (via its TPR domains), APPBP2 (via BaSS) and DDB1. In vitro, it binds MAPT via the MT-binding domains. Associates with microtubules in the presence of ATP and in a kinesin-dependent manner. Interacts, through a C-terminal domain, with GNAO1. Amyloid-beta protein 42 binds CHRNA7 in hippocampal neurons. Amyloid-beta associates with HADH2. Interacts with CPEB1, ANKS1B and AGER. Interacts with ITM2B. Interacts with ITM2C. Interacts with IDE. Can form homodimers; dimerization is enhanced in the presence of Cu(2+) ions. Can form homodimers; this is promoted by heparin binding. Amyloid-beta protein 40 interacts with S100A9. CTF-alpha product of APP interacts with GSAP. Interacts with SORL1 (via N-terminal ectodomain); this interaction retains APP in the trans-Golgi network and reduces processing into soluble APP-alpha and amyloid-beta peptides. The C99 fragment also interacts with SORL1. Interacts with PLD3. Interacts with VDAC1. Interacts with NSG1; could regulate APP processing. Amyloid-beta protein 42 interacts with FPR2. Interacts (via transmembrane region) with PSEN1; the interaction is direct. Interacts with LRRK2. Interacts (via cytoplasmic domain) with KIF5B. Interacts (via C-terminus) with APBB2/FE65L1 (via C-terminus). Interacts (via intracellular domain) with APBB3. In terms of processing, proteolytically processed under normal cellular conditions. Cleavage either by alpha-secretase, beta-secretase or theta-secretase leads to generation and extracellular release of soluble APP peptides, S-APP-alpha and S-APP-beta, and the retention of corresponding membrane-anchored C-terminal fragments, C80, C83 and C99. Subsequent processing of C80 and C83 by gamma-secretase yields P3 peptides. This is the major secretory pathway and is non-amyloidogenic. Alternatively, presenilin/nicastrin-mediated gamma-secretase processing of C99 releases the amyloid-beta proteins, amyloid-beta protein 40 and amyloid-beta protein 42, major components of amyloid plaques, and the cytotoxic C-terminal fragments, gamma-CTF(50), gamma-CTF(57) and gamma-CTF(59). PSEN1 cleavage is more efficient with C83 than with C99 as substrate (in vitro). Amyloid-beta protein 40 and Amyloid-beta protein 42 are cleaved by ACE. Many other minor amyloid-beta peptides, amyloid-beta 1-X peptides, are found in cerebral spinal fluid (CSF) including the amyloid-beta X-15 peptides, produced from the cleavage by alpha-secretase. Proteolytically cleaved by caspases during neuronal apoptosis. Cleavage at Asp-739 by either caspase-3, -8 or -9 results in the production of the neurotoxic C31 peptide and the increased production of amyloid-beta peptides. Post-translationally, N- and O-glycosylated. In terms of processing, phosphorylation in the C-terminal on tyrosine, threonine and serine residues is neuron-specific. Phosphorylation can affect APP processing, neuronal differentiation and interaction with other proteins. Phosphorylated on Thr-743 in neuronal cells by Cdc5 kinase and Mapk10, in dividing cells by Cdc2 kinase in a cell-cycle dependent manner with maximal levels at the G2/M phase and, in vitro, by GSK-3-beta. The Thr-743 phosphorylated form causes a conformational change which reduces binding of Fe65 family members. In dopaminergic (DA) neurons, phosphorylation on Thr-743 by LRKK2 promotes the production and the nuclear translocation of the APP intracellular domain (AICD) which induces DA neuron apoptosis. Phosphorylation on Tyr-757 is required for SHC binding. Phosphorylated in the extracellular domain by casein kinases on both soluble and membrane-bound APP. This phosphorylation is inhibited by heparin. Extracellular binding and reduction of copper, results in a corresponding oxidation of Cys-144 and Cys-158, and the formation of a disulfide bond. Post-translationally, trophic-factor deprivation triggers the cleavage of surface APP by beta-secretase to release sAPP-beta which is further cleaved to release an N-terminal fragment of APP (N-APP). In terms of processing, amyloid-beta peptides are degraded by IDE. Sulfated on tyrosine residues.

Its subcellular location is the cell membrane. It is found in the membrane. It localises to the perikaryon. The protein resides in the cell projection. The protein localises to the growth cone. Its subcellular location is the clathrin-coated pit. It is found in the early endosome. It localises to the cytoplasmic vesicle. The protein resides in the endoplasmic reticulum. The protein localises to the golgi apparatus. Its subcellular location is the secreted. It is found in the cell surface. It localises to the nucleus. The protein resides in the cytoplasm. In terms of biological role, functions as a cell surface receptor and performs physiological functions on the surface of neurons relevant to neurite growth, neuronal adhesion and axonogenesis. Interaction between APP molecules on neighboring cells promotes synaptogenesis. Involved in cell mobility and transcription regulation through protein-protein interactions. Can promote transcription activation through binding to APBB1-KAT5 and inhibit Notch signaling through interaction with Numb. Couples to apoptosis-inducing pathways such as those mediated by G(o) and JIP. Inhibits G(o)-alpha ATPase activity. Acts as a kinesin I membrane receptor, mediating the axonal transport of beta-secretase and presenilin 1. By acting as a kinesin I membrane receptor, plays a role in axonal anterograde transport of cargo towards synapses in axons. May be involved in copper homeostasis/oxidative stress through copper ion reduction. In vitro, copper-metallated APP induces neuronal death directly or is potentiated through Cu(2+)-mediated low-density lipoprotein oxidation. Can regulate neurite outgrowth through binding to components of the extracellular matrix such as heparin and collagen I and IV. Induces a AGER-dependent pathway that involves activation of p38 MAPK, resulting in internalization of amyloid-beta peptide and mitochondrial dysfunction in cultured cortical neurons. Provides Cu(2+) ions for GPC1 which are required for release of nitric oxide (NO) and subsequent degradation of the heparan sulfate chains on GPC1. Functionally, amyloid-beta peptides are lipophilic metal chelators with metal-reducing activity. Binds transient metals such as copper, zinc and iron. Its function is as follows. The gamma-CTF peptides as well as the caspase-cleaved peptides, including C31, are potent enhancers of neuronal apoptosis. This is Amyloid-beta precursor protein from Sus scrofa (Pig).